Consider the following 570-residue polypeptide: Sulfite reductase [NADPH] hemoprotein beta-component (570 aa).

4 residues coordinate [4Fe-4S] cluster: cysteine 434, cysteine 440, cysteine 479, and cysteine 483. Cysteine 483 is a siroheme binding site.

The protein belongs to the nitrite and sulfite reductase 4Fe-4S domain family. In terms of assembly, alpha(8)-beta(8). The alpha component is a flavoprotein, the beta component is a hemoprotein. Siroheme is required as a cofactor. It depends on [4Fe-4S] cluster as a cofactor.

The catalysed reaction is hydrogen sulfide + 3 NADP(+) + 3 H2O = sulfite + 3 NADPH + 4 H(+). The protein operates within sulfur metabolism; hydrogen sulfide biosynthesis; hydrogen sulfide from sulfite (NADPH route): step 1/1. Functionally, component of the sulfite reductase complex that catalyzes the 6-electron reduction of sulfite to sulfide. This is one of several activities required for the biosynthesis of L-cysteine from sulfate. This Salmonella gallinarum (strain 287/91 / NCTC 13346) protein is Sulfite reductase [NADPH] hemoprotein beta-component.